The sequence spans 342 residues: Immune-associated nucleotide-binding protein 9 (342 aa).

The AIG1-type G domain occupies 22 to 229; that stretch reads NPKRTLVLVG…YSDELFHELQ (208 aa). The G1 stretch occupies residues 31–38; sequence GRTGNGKS. Residues 31-39 and Ser52 contribute to the GTP site; that span reads GRTGNGKSA. A G2 region spans residues 58–62; it reads GVTST. The G3 stretch occupies residues 80-83; sequence DTPG. The segment at 149–152 is G4; sequence TGGD. The tract at residues 188–190 is G5; the sequence is NNK. Asn189 contacts GTP. The stretch at 276–342 forms a coiled coil; the sequence is ETKLRDTAKR…QKKLGKCINL (67 aa).

Belongs to the TRAFAC class TrmE-Era-EngA-EngB-Septin-like GTPase superfamily. AIG1/Toc34/Toc159-like paraseptin GTPase family. IAN subfamily. Mainly expressed in leaves.

The sequence is that of Immune-associated nucleotide-binding protein 9 from Arabidopsis thaliana (Mouse-ear cress).